A 240-amino-acid polypeptide reads, in one-letter code: uncharacterized protein (240 aa).

An N-terminal signal peptide occupies residues methionine 1 to serine 30.

This is an uncharacterized protein from Methanocaldococcus jannaschii (strain ATCC 43067 / DSM 2661 / JAL-1 / JCM 10045 / NBRC 100440) (Methanococcus jannaschii).